Here is a 741-residue protein sequence, read N- to C-terminus: Aspartyl/asparaginyl beta-hydroxylase (741 aa).

A disordered region spans residues 1 to 54 (MAPRKNAKGGGGNSSSSGSGSGSGSGSPSTGSSGSSSSPGARREAKHGGHKNGR). The Cytoplasmic portion of the chain corresponds to 1–62 (MAPRKNAKGG…GRRGGISGGS (62 aa)). Residues 8–25 (KGGGGNSSSSGSGSGSGS) show a composition bias toward gly residues. Phosphoserine is present on Ser15. The segment covering 26–40 (GSPSTGSSGSSSSPG) has biased composition (low complexity). The helical; Signal-anchor for type II membrane protein transmembrane segment at 63–83 (FFTWFMVIALLGVWTSVAVVW) threads the bilayer. Over 84 to 741 (FDLVDYEEVL…PQQRRSLPAI (658 aa)) the chain is Lumenal. Residues Asp100, Asp102, Asp104, Asp106, and Asp111 each coordinate Ca(2+). 2 disordered regions span residues 120-141 (ERSP…AELE) and 222-244 (TASQ…SDPS). The segment covering 231 to 242 (MEEMTNEQENSD) has biased composition (acidic residues). TPR repeat units lie at residues 324–357 (IKAE…YPQS), 365–398 (AQCE…PDAP), 437–470 (TTLK…TPND), 472–504 (FAKV…GDPG), and 508–540 (GRFY…GHFA). Asn453 carries an N-linked (GlcNAc...) asparagine glycan. Trp608 lines the 2-oxoglutarate pocket. Residues Cys624 and Cys631 are joined by a disulfide bond. Ser651 serves as a coordination point for 2-oxoglutarate. A Fe cation-binding site is contributed by His662. 671-673 (RMH) is a binding site for 2-oxoglutarate. Residue Asn689 is glycosylated (N-linked (GlcNAc...) asparagine). His708 is a Fe cation binding site. Arg718 contributes to the 2-oxoglutarate binding site.

Belongs to the aspartyl/asparaginyl beta-hydroxylase family. Monomer. Isoform 2 interacts with CASQ2. The cofactor is Fe cation. Isoform 1 is detected in heart, liver and ovary (at protein level). Detected in heart ventricle. Isoform 1 is widely expressed. Isoform 2 is detected in heart and skeletal muscle.

Its subcellular location is the endoplasmic reticulum membrane. It localises to the sarcoplasmic reticulum membrane. It catalyses the reaction L-aspartyl-[protein] + 2-oxoglutarate + O2 = 3-hydroxy-L-aspartyl-[protein] + succinate + CO2. Its function is as follows. Specifically hydroxylates an Asp or Asn residue in certain epidermal growth factor-like (EGF) domains of a number of proteins. The polypeptide is Aspartyl/asparaginyl beta-hydroxylase (Asph) (Mus musculus (Mouse)).